Consider the following 162-residue polypeptide: Regulator of sigma D (162 aa).

The protein belongs to the Rsd/AlgQ family. As to quaternary structure, interacts with RpoD.

It is found in the cytoplasm. Its function is as follows. Binds RpoD and negatively regulates RpoD-mediated transcription activation by preventing the interaction between the primary sigma factor RpoD with the catalytic core of the RNA polymerase and with promoter DNA. May be involved in replacement of the RNA polymerase sigma subunit from RpoD to RpoS during the transition from exponential growth to the stationary phase. The sequence is that of Regulator of sigma D from Salmonella paratyphi A (strain ATCC 9150 / SARB42).